We begin with the raw amino-acid sequence, 287 residues long: Nucleoside kinase (287 aa).

Substrate is bound by residues aspartate 13, asparagine 28, glycine 38, and asparagine 42. Glutamine 102 contacts ATP. 2 residues coordinate substrate: serine 104 and glutamine 150. Residues asparagine 173 and 196 to 201 each bind ATP; that span reads TNGERG. A substrate-binding site is contributed by aspartate 227. The active-site Proton acceptor is aspartate 227.

The protein belongs to the carbohydrate kinase PfkB family. Homodimer. Mg(2+) serves as cofactor. The cofactor is Co(2+).

It catalyses the reaction adenosine + ATP = AMP + ADP + H(+). It carries out the reaction cytidine + ATP = CMP + ADP + H(+). The enzyme catalyses guanosine + ATP = GMP + ADP + H(+). The catalysed reaction is inosine + ATP = IMP + ADP + H(+). Functionally, nucleoside kinase with broad substrate specificity. Catalyzes the phosphorylation of a variety of nucleosides to the corresponding nucleoside 5'-mono-phosphate in the presence of phosphate donors and divalent cations. Displays the most efficient activity with guanosine, followed by inosine, cytidine, and adenosine. Negligible enzymatic activity is detected with thymidine, uridine, and 2-deoxyadenosine. ATP is the most efficient phosphate donor, but can also use GTP and ITP. Shows no sugar kinase activity, since it is unable to phosphorylate ribose, fructose-1-phosphate, or fructose-6-phosphate. This chain is Nucleoside kinase, found in Thermoplasma acidophilum (strain ATCC 25905 / DSM 1728 / JCM 9062 / NBRC 15155 / AMRC-C165).